The following is a 548-amino-acid chain: Adenine deaminase (548 aa).

This sequence belongs to the metallo-dependent hydrolases superfamily. Adenine deaminase family. Requires Mn(2+) as cofactor.

It catalyses the reaction adenine + H2O + H(+) = hypoxanthine + NH4(+). This is Adenine deaminase from Borreliella afzelii (strain PKo) (Borrelia afzelii).